A 349-amino-acid polypeptide reads, in one-letter code: MAATAAEVAASGSGEAREEAEAPGPAWDESQLRSYSFPTRPIPRLSQSDPRAEELIENEEPVVLTDTNLVYPALKWDLEYLQENIGNGDFSVYSASTHKFLYYDEKKMGNFQNFKPRSNREEIKFHEFVEKLQAIQQRGGEERLYLQQTLNDTVGRKIVMDFLGFNWNWINKQQGKRGWGQLTSNLLLIGMEGNVTPAHYDEQQNFFAQIKGHKRCILFPPDQFECLYPYPVHHPCDRQSQVDFDNPDYERFPNFRNVVGYETVVGPGDVLYIPMYWWHHIESLLNGGITITVNFWYKGAPTPKRIEYPLKAHQKVAIMRNIEKMLGEALGNPQEVGPLLNTMIKGRYN.

The span at M1–G14 shows a compositional bias: low complexity. The segment at M1–R51 is disordered. A2 is modified (N-acetylalanine). The interaction with VHL stretch occupies residues A2–F125. The JmjC domain maps to E142–E307. 2-oxoglutarate is bound at residue Y145. Residues D152 and Q181–T183 contribute to the substrate site. T196 provides a ligand contact to 2-oxoglutarate. Residues H199 and D201 each coordinate Fe cation. Residue D201–Q203 coordinates substrate. Positions 205 and 214 each coordinate 2-oxoglutarate. A substrate-binding site is contributed by R238 to Q239. Residue H279 participates in Fe cation binding. N294 serves as a coordination point for 2-oxoglutarate. A300 and N321 together coordinate substrate.

Homodimer; homodimerization is essential for catalytic activity. Interacts with VHL and HIF1A. Part of a complex with VHL, HIF1A and HDAC1 or HDAC2 or HDAC3. Interacts with NFKB1 and NFKBIA. Interacts with NOTCH1, NOTCH2 and NOTCH3 but not with NOTCH4. Interacts with ABPA3. Interacts with TNKS2. Interacts with PPP1R12A. Interacts with UBE3A. Interacts with ASB4. Interacts with ANKS3. Interacts with NECAB3; the interaction is indirect and seems to be mediated by APBA3. The cofactor is Fe(2+).

Its subcellular location is the nucleus. The protein localises to the cytoplasm. It is found in the perinuclear region. It catalyses the reaction L-asparaginyl-[hypoxia-inducible factor alpha subunit] + 2-oxoglutarate + O2 = (3S)-3-hydroxy-L-asparaginyl-[hypoxia-inducible factor alpha subunit] + succinate + CO2. The enzyme catalyses L-histidyl-[ankyrin-repeat domain protein] + 2-oxoglutarate + O2 = (3S)-3-hydroxy-L-histidyl-[ankyrin-repeat domain protein] + succinate + CO2. It carries out the reaction L-asparaginyl-[ankyrin-repeat domain protein] + 2-oxoglutarate + O2 = (3S)-3-hydroxy-L-asparaginyl-[ankyrin-repeat domain protein] + succinate + CO2. The catalysed reaction is L-aspartyl-[ankyrin-repeat domain protein] + 2-oxoglutarate + O2 = (3S)-3-hydroxy-L-aspartyl-[ankyrin-repeat domain protein] + succinate + CO2. In terms of biological role, hydroxylates HIF-1 alpha at 'Asn-799' in the C-terminal transactivation domain (CAD). Functions as an oxygen sensor and, under normoxic conditions, the hydroxylation prevents interaction of HIF-1 with transcriptional coactivators including Cbp/p300-interacting transactivator. Involved in transcriptional repression through interaction with HIF1A, VHL and histone deacetylases. Hydroxylates specific Asn residues within ankyrin repeat domains (ARD) of NFKB1, NFKBIA, NOTCH1, ASB4, PPP1R12A and several other ARD-containing proteins. Also hydroxylates Asp and His residues within ARDs of ANK1 and TNKS2, respectively. Negatively regulates NOTCH1 activity, accelerating myogenic differentiation. Positively regulates ASB4 activity, promoting vascular differentiation. The polypeptide is Hypoxia-inducible factor 1-alpha inhibitor (Hif1an) (Mus musculus (Mouse)).